A 199-amino-acid polypeptide reads, in one-letter code: ParB-like protein Saci_1498 (199 aa).

Belongs to the ParB family.

Its function is as follows. Probably part of a 4-gene DNA damage response locus in which the upstream ups system, in combination with this downstream locus, functions in homologous recombination to rescue Sulfolobales from DNA-damaging threats. This protein might function in the DNA transfer machinery. The polypeptide is ParB-like protein Saci_1498 (Sulfolobus acidocaldarius (strain ATCC 33909 / DSM 639 / JCM 8929 / NBRC 15157 / NCIMB 11770)).